Here is a 133-residue protein sequence, read N- to C-terminus: Small ribosomal subunit protein uS8 (133 aa).

It belongs to the universal ribosomal protein uS8 family. As to quaternary structure, part of the 30S ribosomal subunit. Contacts proteins S5 and S12.

One of the primary rRNA binding proteins, it binds directly to 16S rRNA central domain where it helps coordinate assembly of the platform of the 30S subunit. This chain is Small ribosomal subunit protein uS8, found in Synechococcus sp. (strain WH7803).